A 291-amino-acid chain; its full sequence is Kidney mitochondrial carrier protein 1 (291 aa).

N-acetylserine is present on Ser-2. 3 Solcar repeats span residues 7–96 (KPFV…LKRL), 104–189 (ETLP…TKKH), and 198–289 (DTVY…LKKL). The next 6 membrane-spanning stretches (helical) occupy residues 9-26 (FVYGGLASITAECGTFPI), 71-89 (GIAPAMLRQASYGTIKIGT), 105-124 (TLPINVICGILSGVISSTIA), 164-183 (GVSLTAQRAAIVVGVELPVY), 204-224 (FLSSFTCGLAGALASNPVDVV), and 264-283 (GFWPNWLRLGPWNIIFFVTY).

The protein belongs to the mitochondrial carrier (TC 2.A.29) family. Interacts with VDAC1.

It localises to the mitochondrion inner membrane. It catalyses the reaction sulfite(in) + sulfate(out) = sulfite(out) + sulfate(in). The catalysed reaction is thiosulfate(in) + sulfate(out) = thiosulfate(out) + sulfate(in). The enzyme catalyses sulfate(out) + phosphate(in) = sulfate(in) + phosphate(out). It carries out the reaction oxalate(in) + sulfate(out) = oxalate(out) + sulfate(in). It catalyses the reaction malonate(in) + sulfate(out) = malonate(out) + sulfate(in). The catalysed reaction is maleate(in) + sulfate(out) = maleate(out) + sulfate(in). The enzyme catalyses (S)-malate(in) + sulfate(out) = (S)-malate(out) + sulfate(in). It carries out the reaction (3S)-citramalate(in) + sulfate(out) = (3S)-citramalate(out) + sulfate(in). It catalyses the reaction (3R)-citramalate(in) + sulfate(out) = (3R)-citramalate(out) + sulfate(in). The catalysed reaction is sulfate(out) + succinate(in) = sulfate(in) + succinate(out). The enzyme catalyses (S,S)-tartrate(in) + sulfate(out) = (S,S)-tartrate(out) + sulfate(in). It carries out the reaction (2R,3R)-tartrate(in) + sulfate(out) = (2R,3R)-tartrate(out) + sulfate(in). It catalyses the reaction D-aspartate(in) + sulfate(out) = D-aspartate(out) + sulfate(in). The catalysed reaction is L-aspartate(in) + sulfate(out) = L-aspartate(out) + sulfate(in). The enzyme catalyses sulfate(in) = sulfate(out). It carries out the reaction phosphate(in) = phosphate(out). It catalyses the reaction (S)-malate(out) = (S)-malate(in). Its activity is regulated as follows. Increased activity at pH 6.0. sulfate/sulfate exchange activity is inhibited strongly by pyridoxal 5'-phosphate, bathophenanthroline and the organic mercurials mersalyl, p-chloromercuribenzoate and HgCl2. Functionally, antiporter that transports inorganic anions (sulfate, sulfite, thiosulfate and phosphate) and, to a lesser extent, a variety of dicarboxylates (e.g. malonate, malate and citramalate) and, even more so, aspartate. The sulfate/sulfate exchange is much higher than the phosphate/phosphate and malate/malate exchanges. The transport affinities is higher for sulfate and thiosulfate than for any other substrate. May catalyze the export of sulfite and thiosulfate (the hydrogen sulfide degradation products) from the mitochondria, thereby modulating the level of the hydrogen sulfide. Also may mediate a very low unidirectional transport of sulfate, phosphate and (S)-malate. This chain is Kidney mitochondrial carrier protein 1, found in Homo sapiens (Human).